The chain runs to 166 residues: Ureidoglycolate lyase (166 aa).

This sequence belongs to the ureidoglycolate lyase family. Homodimer. Ni(2+) is required as a cofactor.

The catalysed reaction is (S)-ureidoglycolate = urea + glyoxylate. The protein operates within nitrogen metabolism; (S)-allantoin degradation. Catalyzes the catabolism of the allantoin degradation intermediate (S)-ureidoglycolate, generating urea and glyoxylate. Involved in the utilization of allantoin as nitrogen source. In Azotobacter vinelandii (strain DJ / ATCC BAA-1303), this protein is Ureidoglycolate lyase.